The sequence spans 553 residues: Neutral amino acid transporter B(0) (553 aa).

At Met-1 the chain carries N-acetylmethionine. Residues 1–50 (MAVDPPKADPKGVAVDSSRRCPALGSREDQSAKAGGCCGSRDRVRRCIRA) lie on the Cytoplasmic side of the membrane. A helical membrane pass occupies residues 51 to 80 (NLLVLLTVAAVVAGVGLGLGVSAAGGADAL). Topologically, residues 81–93 (GPARLTRFAFPGE) are extracellular. The helical transmembrane segment at 94–115 (LLLRLLKMIILPLVVCSLIGGA) threads the bilayer. At 116-129 (ASLDPSALGRVGAW) the chain is on the cytoplasmic side. A helical transmembrane segment spans residues 130–152 (ALLFFLVTTLLASALGVGLALAL). Residues 153-236 (KPGAAVTAIT…INSTMVQLLC (84 aa)) lie on the Extracellular side of the membrane. N-linked (GlcNAc...) asparagine glycans are attached at residues Asn-165 and Asn-228. Residues 237–260 (EVEGMNILGLVVFAIVFGVALRKL) form a helical membrane-spanning segment. Over 261 to 269 (GPEGELLIR) the chain is Cytoplasmic. Residues 270–297 (FFNSFNDATMVLVSWIMWYAPVGILFLV) form a helical membrane-spanning segment. Residues 298–318 (ASKIVEMKDVRQLFISLGKYI) lie on the Extracellular side of the membrane. The helical transmembrane segment at 319 to 340 (LCCLLGHAIHGLLVLPLIYFLF) threads the bilayer. At 341-345 (TRKNP) the chain is on the cytoplasmic side. Positions 346–376 (YRFLWGIMTPLATAFGTSSSSATLPLMMKCV) form an intramembrane region, discontinuously helical. Residues 377-385 (EEKNGVAKH) are Cytoplasmic-facing. A helical membrane pass occupies residues 386 to 412 (ISRFILPIGATVNMDGAALFQCVAAVF). The Na(+) site is built by Gly-394, Thr-396, and Asn-398. The Extracellular segment spans residues 413 to 425 (IAQLNGVSLDFVK). The discontinuously helical intramembrane region spans 426-459 (IITILVTATASSVGAAGIPAGGVLTLAIILEAVS). Topologically, residues 460–472 (LPVKDISLILAVD) are extracellular. A helical membrane pass occupies residues 473–494 (WLVDRSCTVLNVEGDAFGAGLL). Na(+) contacts are provided by Asn-483 and Asp-487. Topologically, residues 495–553 (QSYVDRTKMPSSEPELIQVKNEVSLNPLPLATEEGNPLLKQYQGPTGDSSATFEKESVM) are cytoplasmic. 5 positions are modified to phosphoserine: Ser-505, Ser-506, Ser-518, Ser-543, and Ser-551. A disordered region spans residues 531 to 553 (PLLKQYQGPTGDSSATFEKESVM). Polar residues predominate over residues 537–546 (QGPTGDSSAT).

It belongs to the dicarboxylate/amino acid:cation symporter (DAACS) (TC 2.A.23) family. SLC1A5 subfamily. In terms of assembly, homotrimer. Highly expressed in adipose tissue. Detected in lung, skeletal muscle, large intestine, kidney and testis. Expressed in lung, brain, kidney and neural retina (at protein level). Expressed in Mueller cells (at protein level).

It is found in the cell membrane. Its subcellular location is the melanosome. The enzyme catalyses L-glutamine(out) + L-serine(in) + Na(+)(out) = L-glutamine(in) + L-serine(out) + Na(+)(in). The catalysed reaction is L-glutamine(in) + L-serine(out) + Na(+)(out) = L-glutamine(out) + L-serine(in) + Na(+)(in). It carries out the reaction L-threonine(in) + L-glutamine(out) + Na(+)(out) = L-threonine(out) + L-glutamine(in) + Na(+)(in). It catalyses the reaction L-threonine(out) + L-glutamine(in) + Na(+)(out) = L-threonine(in) + L-glutamine(out) + Na(+)(in). The enzyme catalyses L-asparagine(in) + L-glutamine(out) + Na(+)(out) = L-asparagine(out) + L-glutamine(in) + Na(+)(in). The catalysed reaction is L-asparagine(out) + L-glutamine(in) + Na(+)(out) = L-asparagine(in) + L-glutamine(out) + Na(+)(in). It carries out the reaction L-glutamine(in) + L-alanine(out) + Na(+)(out) = L-glutamine(out) + L-alanine(in) + Na(+)(in). It catalyses the reaction L-valine(out) + L-glutamine(in) + Na(+)(out) = L-valine(in) + L-glutamine(out) + Na(+)(in). The enzyme catalyses L-glutamine(in) + L-methionine(out) + Na(+)(out) = L-glutamine(out) + L-methionine(in) + Na(+)(in). The catalysed reaction is L-glutamine(in) + L-glutamate(out) + Na(+)(out) + H(+)(out) = L-glutamine(out) + L-glutamate(in) + Na(+)(in) + H(+)(in). It carries out the reaction D-serine(in) + L-glutamine(out) + Na(+)(out) = D-serine(out) + L-glutamine(in) + Na(+)(in). It catalyses the reaction D-serine(in) + L-alanine(out) + Na(+)(out) = D-serine(out) + L-alanine(in) + Na(+)(in). The enzyme catalyses nitrate(in) = nitrate(out). The catalysed reaction is iodide(out) = iodide(in). It carries out the reaction thiocyanate(in) = thiocyanate(out). With respect to regulation, down-regulated at acidic pH, with the exception of L-glutamate transport which is up-regulated instead. Sodium-coupled antiporter of neutral amino acids. In a tri-substrate transport cycle, exchanges neutral amino acids between the extracellular and intracellular compartments, coupled to the inward cotransport of at least one sodium ion. The preferred substrate is the essential amino acid L-glutamine, a precursor for biosynthesis of proteins, nucleotides and amine sugars as well as an alternative fuel for mitochondrial oxidative phosphorylation. Exchanges L-glutamine with other neutral amino acids such as L-serine, L-threonine and L-asparagine in a bidirectional way. Provides L-glutamine to proliferating stem and activated cells driving the metabolic switch toward cell differentiation. The transport cycle is usually pH-independent, with the exception of L-glutamate. Transports extracellular L-glutamate coupled to the cotransport of one proton and one sodium ion in exchange for intracellular L-glutamine counter-ion. May provide for L-glutamate uptake in glial cells regulating glutamine/glutamate cycle in the nervous system. Can transport D-amino acids. Mediates D-serine release from the retinal glia potentially affecting NMDA receptor function in retinal neurons. Displays sodium- and amino acid-dependent but uncoupled channel-like anion conductance with a preference SCN(-) &gt;&gt; NO3(-) &gt; I(-) &gt; Cl(-). Through binding of the fusogenic protein syncytin-1/ERVW-1 may mediate trophoblasts syncytialization, the spontaneous fusion of their plasma membranes, an essential process in placental development. The sequence is that of Neutral amino acid transporter B(0) (Slc1a5) from Mus musculus (Mouse).